Consider the following 494-residue polypeptide: MSQSRTYQVRTYGCQMNVHDSERLSGLLEAAGYQRAAEGTTPDVVVFNTCAVRENADNRLYGNLGQLRPVKDANPDMQIAVGGCLAQKDRGEIIRRAPWVDVVFGTHNIGSLPALLERARVQREAQVEIVESLERFPSTLPTRRESVYAAWVAISVGCNNTCTFCIVPALRGKEKDRRPGDILAEIRAVVAEGAIEVTLLGQNVNAYGSEFGDRQAFSKLLRACGEIEGLERVRFTSPHPRDFTDDVIAAMAETPNVMPQLHMPLQSGSDRILRAMRRSYRAERFLRIVEKVREAIPDAAITTDVIVGFPGETEEDFAETLRVMEEVRFAHAFTFQYSKRPGTPAASMDNQVPREVVKERYQRLLELQERISEEENAKFVGREVEVLVAEGEGRKDDVHRRMSGRARDNRLVHFAVDEGVTVRPGDMVTVEVTYAAPHHLVADSGIRNLRRTRAGDAWEARNAPERRPTGVLLGMPKVGAPEPQPSVVGGCCDS.

An MTTase N-terminal domain is found at 5–121 (RTYQVRTYGC…LPALLERARV (117 aa)). Positions 14, 50, 84, 158, 162, and 165 each coordinate [4Fe-4S] cluster. A Radical SAM core domain is found at 144 to 374 (RESVYAAWVA…LELQERISEE (231 aa)). In terms of domain architecture, TRAM spans 377–446 (AKFVGREVEV…PHHLVADSGI (70 aa)). A compositionally biased stretch (basic and acidic residues) spans 458 to 468 (WEARNAPERRP). The interval 458–494 (WEARNAPERRPTGVLLGMPKVGAPEPQPSVVGGCCDS) is disordered.

Belongs to the methylthiotransferase family. MiaB subfamily. In terms of assembly, monomer. [4Fe-4S] cluster is required as a cofactor.

The protein localises to the cytoplasm. It catalyses the reaction N(6)-dimethylallyladenosine(37) in tRNA + (sulfur carrier)-SH + AH2 + 2 S-adenosyl-L-methionine = 2-methylsulfanyl-N(6)-dimethylallyladenosine(37) in tRNA + (sulfur carrier)-H + 5'-deoxyadenosine + L-methionine + A + S-adenosyl-L-homocysteine + 2 H(+). Its function is as follows. Catalyzes the methylthiolation of N6-(dimethylallyl)adenosine (i(6)A), leading to the formation of 2-methylthio-N6-(dimethylallyl)adenosine (ms(2)i(6)A) at position 37 in tRNAs that read codons beginning with uridine. The sequence is that of tRNA-2-methylthio-N(6)-dimethylallyladenosine synthase from Thermobifida fusca (strain YX).